A 678-amino-acid polypeptide reads, in one-letter code: Serine/threonine-protein kinase PLK (678 aa).

Residues Tyr-22 to Leu-309 enclose the Protein kinase domain. Residues Leu-28–Val-36 and Lys-51 each bind ATP. Asp-145 serves as the catalytic Proton acceptor. A phosphothreonine; by autocatalysis mark is found at Thr-179 and Thr-183. POLO box domains lie at Tyr-435 to Asn-516 and Phe-563 to Ala-644. The interval Lys-658–Glu-678 is disordered. A compositionally biased stretch (polar residues) spans Lys-663–Glu-678.

This sequence belongs to the protein kinase superfamily. Ser/Thr protein kinase family. CDC5/Polo subfamily. As to quaternary structure, interacts with Kin-13. In terms of processing, autophosphorylated. Autophosphorylation is critical for its function in cell growth, cytokinesis and formation of flagella.

Its subcellular location is the cell projection. The protein localises to the cilium. The protein resides in the flagellum. It localises to the cytoplasm. It is found in the cytoskeleton. Its subcellular location is the flagellum basal body. The protein localises to the flagellum axoneme. The protein resides in the spindle. It localises to the membrane. It catalyses the reaction L-seryl-[protein] + ATP = O-phospho-L-seryl-[protein] + ADP + H(+). It carries out the reaction L-threonyl-[protein] + ATP = O-phospho-L-threonyl-[protein] + ADP + H(+). With respect to regulation, inhibited by GW843286X (GW), an ATP-competitive inhibitor. Inhibition leads to reduced growth, increased number of cells with more than four nuclei, increased number of cells with condensed nuclei, cell cycle arrest at G2/M or G1/S phase depending on the treatment time with GW, and increased length of membrane-bound portions of the caudal and anterior flagella. Functionally, involved in cell cycle. Involved in cell division. Involved in cytokinesis. Involved in flagella biogenesis and in regulation of flagella length in interphase. Involved in formation of median bodies during interphase. Phosphorylates Kin-13 in vitro. Likely regulates microtubule (MT) depolymerizing activity of Kin-13. This is Serine/threonine-protein kinase PLK from Giardia intestinalis (strain ATCC 50803 / WB clone C6) (Giardia lamblia).